Consider the following 248-residue polypeptide: Probable transcriptional regulatory protein PSPTO_3980 (248 aa).

It belongs to the TACO1 family.

Its subcellular location is the cytoplasm. In Pseudomonas syringae pv. tomato (strain ATCC BAA-871 / DC3000), this protein is Probable transcriptional regulatory protein PSPTO_3980.